A 223-amino-acid chain; its full sequence is ATP phosphoribosyltransferase (223 aa).

The protein belongs to the ATP phosphoribosyltransferase family. Short subfamily. Heteromultimer composed of HisG and HisZ subunits.

Its subcellular location is the cytoplasm. It carries out the reaction 1-(5-phospho-beta-D-ribosyl)-ATP + diphosphate = 5-phospho-alpha-D-ribose 1-diphosphate + ATP. It participates in amino-acid biosynthesis; L-histidine biosynthesis; L-histidine from 5-phospho-alpha-D-ribose 1-diphosphate: step 1/9. Functionally, catalyzes the condensation of ATP and 5-phosphoribose 1-diphosphate to form N'-(5'-phosphoribosyl)-ATP (PR-ATP). Has a crucial role in the pathway because the rate of histidine biosynthesis seems to be controlled primarily by regulation of HisG enzymatic activity. This Bordetella bronchiseptica (strain ATCC BAA-588 / NCTC 13252 / RB50) (Alcaligenes bronchisepticus) protein is ATP phosphoribosyltransferase.